Reading from the N-terminus, the 355-residue chain is DNA-directed RNA polymerase subunit alpha (355 aa).

The tract at residues 1-248 (MYYNNDVSLC…EQLQPFISSD (248 aa)) is alpha N-terminal domain (alpha-NTD). Residues 267-355 (YDPVLLRKVD…ELAKQHTDED (89 aa)) are alpha C-terminal domain (alpha-CTD).

The protein belongs to the RNA polymerase alpha chain family. As to quaternary structure, homodimer. The RNAP catalytic core consists of 2 alpha, 1 beta, 1 beta' and 1 omega subunit. When a sigma factor is associated with the core the holoenzyme is formed, which can initiate transcription.

It carries out the reaction RNA(n) + a ribonucleoside 5'-triphosphate = RNA(n+1) + diphosphate. In terms of biological role, DNA-dependent RNA polymerase catalyzes the transcription of DNA into RNA using the four ribonucleoside triphosphates as substrates. In Wolbachia pipientis wMel, this protein is DNA-directed RNA polymerase subunit alpha.